Reading from the N-terminus, the 530-residue chain is Ubiquitin carboxyl-terminal hydrolase 17-like protein 5 (530 aa).

One can recognise a USP domain in the interval 80-375; it reads AGLQNMGNTC…QAYVLFYIQK (296 aa). The active-site Nucleophile is the Cys-89. His-334 serves as the catalytic Proton acceptor. Composition is skewed to basic and acidic residues over residues 382 to 392 and 398 to 412; these read SESVSRGREPR and DTDR…KRDH. Disordered regions lie at residues 382 to 412 and 477 to 530; these read SESV…KRDH and NHHP…LVCQ. Residues 493–505 show a composition bias toward polar residues; it reads TPTHQESMNTGTL. Residues 510-524 are compositionally biased toward basic residues; that stretch reads GRARRSKGKNKHSKR.

Belongs to the peptidase C19 family. USP17 subfamily.

The protein localises to the nucleus. Its subcellular location is the endoplasmic reticulum. It carries out the reaction Thiol-dependent hydrolysis of ester, thioester, amide, peptide and isopeptide bonds formed by the C-terminal Gly of ubiquitin (a 76-residue protein attached to proteins as an intracellular targeting signal).. Deubiquitinating enzyme that removes conjugated ubiquitin from specific proteins to regulate different cellular processes that may include cell proliferation, progression through the cell cycle, apoptosis, cell migration, and the cellular response to viral infection. The protein is Ubiquitin carboxyl-terminal hydrolase 17-like protein 5 (USP17L5) of Homo sapiens (Human).